We begin with the raw amino-acid sequence, 329 residues long: Protoheme IX farnesyltransferase (329 aa).

7 helical membrane-spanning segments follow: residues 61 to 81 (LACTLGGGALAAAAAGVLNCL), 108 to 128 (AFLIAVALACGASLLLVAGVN), 130 to 150 (LAAGLSLLGLCSYVLLYTIVL), 158 to 178 (IVIGGVAGAIPPLVGAAAATG), 186 to 206 (WLFGLVMLWTPAHFWALALLL), 243 to 263 (LLGVLTLPSGGLFYGLMVLPF), and 284 to 304 (AKGLFRWSILYLFGICLLLLL).

It belongs to the UbiA prenyltransferase family. Protoheme IX farnesyltransferase subfamily.

It localises to the cell inner membrane. The catalysed reaction is heme b + (2E,6E)-farnesyl diphosphate + H2O = Fe(II)-heme o + diphosphate. It functions in the pathway porphyrin-containing compound metabolism; heme O biosynthesis; heme O from protoheme: step 1/1. In terms of biological role, converts heme B (protoheme IX) to heme O by substitution of the vinyl group on carbon 2 of heme B porphyrin ring with a hydroxyethyl farnesyl side group. The sequence is that of Protoheme IX farnesyltransferase from Synechococcus sp. (strain RCC307).